A 478-amino-acid chain; its full sequence is Mannose-1-phosphate guanylyltransferase (478 aa).

This sequence belongs to the mannose-6-phosphate isomerase type 2 family.

The enzyme catalyses alpha-D-mannose 1-phosphate + GTP + H(+) = GDP-alpha-D-mannose + diphosphate. The protein operates within nucleotide-sugar biosynthesis; GDP-alpha-D-mannose biosynthesis; GDP-alpha-D-mannose from alpha-D-mannose 1-phosphate (GTP route): step 1/1. In terms of biological role, involved in the biosynthesis of the capsular polysaccharide colanic acid. This Escherichia coli (strain K12) protein is Mannose-1-phosphate guanylyltransferase (manC).